The sequence spans 156 residues: MSKLTHVREDGSAHMVDVTGKNETSRTAVAEGFVKMRGDVVKQLFSAGLPKGDALPVARIAGIMGAKKTPDIIPLCHPLPLGKITVDFFELADGVRIEASVKTRGVTGVEMEALTAVSTAALTVYDMIKAVDKMAVIDGIRVLSKTGGKSGDWSVQ.

Substrate contacts are provided by residues 75–77 (LCH) and 111–112 (ME). The active site involves Asp-126.

It belongs to the MoaC family. As to quaternary structure, homohexamer; trimer of dimers.

It carries out the reaction (8S)-3',8-cyclo-7,8-dihydroguanosine 5'-triphosphate = cyclic pyranopterin phosphate + diphosphate. It functions in the pathway cofactor biosynthesis; molybdopterin biosynthesis. Functionally, catalyzes the conversion of (8S)-3',8-cyclo-7,8-dihydroguanosine 5'-triphosphate to cyclic pyranopterin monophosphate (cPMP). The protein is Cyclic pyranopterin monophosphate synthase of Corynebacterium glutamicum (strain R).